The following is a 1887-amino-acid chain: Protein TIC 214 (1887 aa).

6 helical membrane-spanning segments follow: residues 18–38 (IINS…FSIG), 64–84 (FITG…HLAL), 87–107 (PHTI…WNNH), 124–144 (LSIQ…HFIL), 172–192 (VGWL…LVWI), and 221–241 (IFSI…PSPI). Disordered regions lie at residues 248-300 (EASK…EGWD), 786-805 (EEQT…DNKR), and 1569-1603 (LPSN…NLSP). The span at 256-268 (VESEEERDVEIET) shows a compositional bias: acidic residues. Residues 775-816 (KEREFKILESREEQTKREEKKEKDKKEDNKRKEQARIAIEEA) adopt a coiled-coil conformation. Over residues 1578 to 1597 (RSQETKEPPSQRERGSDIEN) the composition is skewed to basic and acidic residues.

It belongs to the TIC214 family. In terms of assembly, part of the Tic complex.

It localises to the plastid. Its subcellular location is the chloroplast inner membrane. Functionally, involved in protein precursor import into chloroplasts. May be part of an intermediate translocation complex acting as a protein-conducting channel at the inner envelope. The chain is Protein TIC 214 from Solanum bulbocastanum (Wild potato).